Consider the following 352-residue polypeptide: Protein RecA (352 aa).

65–72 lines the ATP pocket; the sequence is GPESSGKT. Residues 332-352 form a disordered region; that stretch reads EEVEKADVKKDAKKDAAEALK. Residues 333–352 are compositionally biased toward basic and acidic residues; that stretch reads EVEKADVKKDAKKDAAEALK.

It belongs to the RecA family.

Its subcellular location is the cytoplasm. Functionally, can catalyze the hydrolysis of ATP in the presence of single-stranded DNA, the ATP-dependent uptake of single-stranded DNA by duplex DNA, and the ATP-dependent hybridization of homologous single-stranded DNAs. It interacts with LexA causing its activation and leading to its autocatalytic cleavage. In Photobacterium profundum (strain SS9), this protein is Protein RecA.